Reading from the N-terminus, the 350-residue chain is MQRSLDSLAGMATSAFGAGTSAAMRQATSPKTILEYIINFFTCGGIRRRNETQYQELIETMAETLKSTMPDRGAPLPENIILDDMDGCRVEFNLPGENNEAGQVIVRVSKGDHSETREIPLVSFEKICRALLFRCEFSLPQDSVILTAQGGMNLKGAVLTGANLTAENLCDADLSGANLEGAVLFMADCEGANFKGANLSGTSLGDSNFKNACLEDSIMCGATLDHANLTGANLQHASLLGCSMIECNCSGANMDHTNLSGATLIRADMSGATLQGATIMAAIMEDAVLTRANLRKASFISTNLDGADLAEANLNNTCFKDCTLTHLRTEDATMSTSTQTLFNEFYSENI.

4 consecutive Pentapeptide repeat domains span residues 162–201 (ANLT…NLSG), 202–241 (TSLG…SLLG), 247–286 (CNCS…IMED), and 287–326 (AVLT…TLTH).

As to quaternary structure, interacts with the host kinesin light chain (KLC), a subunit of the kinesin-1 motor complex.

Its subcellular location is the secreted. The protein localises to the host membrane. Functionally, effector proteins function to alter host cell physiology and promote bacterial survival in host tissues. Involved in the reorganization of late endosome/lysosome (LE/Lys) compartments in mammalian cells. Necessary and sufficient to link kinesin-1 onto the Salmonella-containing vacuole (SCV) membrane. Required for centrifugal extension of lysosomal glycoprotein-rich membrane tubules, known as Salmonella-induced filaments (Sifs), away from the SCV and toward the cell periphery. Required for virulence, but not for intracellular survival and replication in phagocytic cells. This chain is Secreted effector protein PipB2 (pipB2), found in Salmonella choleraesuis (strain SC-B67).